A 155-amino-acid polypeptide reads, in one-letter code: Ribosome maturation factor RimP (155 aa).

It belongs to the RimP family.

It localises to the cytoplasm. Required for maturation of 30S ribosomal subunits. The protein is Ribosome maturation factor RimP of Hamiltonella defensa subsp. Acyrthosiphon pisum (strain 5AT).